Here is an 849-residue protein sequence, read N- to C-terminus: Mechanosensitive ion channel protein 7 (849 aa).

A disordered region spans residues 1–49 (MEFRKPFKSHSSYKQIISTGDQNEKTKKKKKLANLDDGDIAKTQSSGSS). Positions 9–21 (SHSSYKQIISTGD) are enriched in polar residues. Transmembrane regions (helical) follow at residues 231–251 (AITLLQWMSLIALVVALVLSL), 274–294 (LVLICGRLVSGCGIRIIVFFI), 313–333 (TAVQNCLWLGLVLLAWHFLFD), 344–364 (VLLLMSKILVCFLLSTVLWLI), 606–626 (MISFLTAIVIIVIWLILLEIA), and 642–662 (AFMFGNSLKTVFESIIFLFII).

It belongs to the MscS (TC 1.A.23) family.

Its subcellular location is the membrane. In terms of biological role, mechanosensitive channel that opens in response to stretch forces in the membrane lipid bilayer. The protein is Mechanosensitive ion channel protein 7 (MSL7) of Arabidopsis thaliana (Mouse-ear cress).